The following is a 316-amino-acid chain: Putative phosphoribosylaminoimidazole-succinocarboxamide synthase 2 (316 aa).

This sequence belongs to the SAICAR synthetase family.

The catalysed reaction is 5-amino-1-(5-phospho-D-ribosyl)imidazole-4-carboxylate + L-aspartate + ATP = (2S)-2-[5-amino-1-(5-phospho-beta-D-ribosyl)imidazole-4-carboxamido]succinate + ADP + phosphate + 2 H(+). The protein operates within purine metabolism; IMP biosynthesis via de novo pathway; 5-amino-1-(5-phospho-D-ribosyl)imidazole-4-carboxamide from 5-amino-1-(5-phospho-D-ribosyl)imidazole-4-carboxylate: step 1/2. In Agrobacterium fabrum (strain C58 / ATCC 33970) (Agrobacterium tumefaciens (strain C58)), this protein is Putative phosphoribosylaminoimidazole-succinocarboxamide synthase 2 (purC2).